Consider the following 430-residue polypeptide: Probable dual-specificity RNA methyltransferase RlmN (430 aa).

The active-site Proton acceptor is E125. One can recognise a Radical SAM core domain in the interval 152 to 395 (RHGRVTLCVS…VTVRDTRGRE (244 aa)). An intrachain disulfide couples C159 to C400. Residues C166, C170, and C173 each coordinate [4Fe-4S] cluster. S-adenosyl-L-methionine-binding positions include 221 to 222 (GE), S255, 278 to 280 (SLH), and N357. Catalysis depends on C400, which acts as the S-methylcysteine intermediate.

The protein belongs to the radical SAM superfamily. RlmN family. [4Fe-4S] cluster serves as cofactor.

The protein resides in the cytoplasm. The enzyme catalyses adenosine(2503) in 23S rRNA + 2 reduced [2Fe-2S]-[ferredoxin] + 2 S-adenosyl-L-methionine = 2-methyladenosine(2503) in 23S rRNA + 5'-deoxyadenosine + L-methionine + 2 oxidized [2Fe-2S]-[ferredoxin] + S-adenosyl-L-homocysteine. It catalyses the reaction adenosine(37) in tRNA + 2 reduced [2Fe-2S]-[ferredoxin] + 2 S-adenosyl-L-methionine = 2-methyladenosine(37) in tRNA + 5'-deoxyadenosine + L-methionine + 2 oxidized [2Fe-2S]-[ferredoxin] + S-adenosyl-L-homocysteine. Functionally, specifically methylates position 2 of adenine 2503 in 23S rRNA and position 2 of adenine 37 in tRNAs. The protein is Probable dual-specificity RNA methyltransferase RlmN of Acidothermus cellulolyticus (strain ATCC 43068 / DSM 8971 / 11B).